Consider the following 294-residue polypeptide: Indole-3-glycerol phosphate synthase (294 aa).

It belongs to the TrpC family.

The enzyme catalyses 1-(2-carboxyphenylamino)-1-deoxy-D-ribulose 5-phosphate + H(+) = (1S,2R)-1-C-(indol-3-yl)glycerol 3-phosphate + CO2 + H2O. Its pathway is amino-acid biosynthesis; L-tryptophan biosynthesis; L-tryptophan from chorismate: step 4/5. In Synechococcus sp. (strain RCC307), this protein is Indole-3-glycerol phosphate synthase.